The sequence spans 204 residues: Methylthioribulose-1-phosphate dehydratase (204 aa).

2 residues coordinate Zn(2+): His94 and His96.

It belongs to the aldolase class II family. MtnB subfamily. Zn(2+) serves as cofactor.

It catalyses the reaction 5-(methylsulfanyl)-D-ribulose 1-phosphate = 5-methylsulfanyl-2,3-dioxopentyl phosphate + H2O. It functions in the pathway amino-acid biosynthesis; L-methionine biosynthesis via salvage pathway; L-methionine from S-methyl-5-thio-alpha-D-ribose 1-phosphate: step 2/6. Catalyzes the dehydration of methylthioribulose-1-phosphate (MTRu-1-P) into 2,3-diketo-5-methylthiopentyl-1-phosphate (DK-MTP-1-P). The protein is Methylthioribulose-1-phosphate dehydratase of Cronobacter sakazakii (strain ATCC BAA-894) (Enterobacter sakazakii).